The primary structure comprises 266 residues: tRNA (guanine-N(1)-)-methyltransferase (266 aa).

Residues Gly-113 and 137 to 142 (LGDYVL) contribute to the S-adenosyl-L-methionine site.

Belongs to the RNA methyltransferase TrmD family. Homodimer.

Its subcellular location is the cytoplasm. The enzyme catalyses guanosine(37) in tRNA + S-adenosyl-L-methionine = N(1)-methylguanosine(37) in tRNA + S-adenosyl-L-homocysteine + H(+). Specifically methylates guanosine-37 in various tRNAs. This Paenarthrobacter aurescens (strain TC1) protein is tRNA (guanine-N(1)-)-methyltransferase.